The sequence spans 387 residues: Phosphoglycerate kinase (387 aa).

Substrate is bound by residues Asp21–Asn23, Arg36, His59–Arg62, Arg113, and Arg146. ATP contacts are provided by residues Lys197, Glu314, and Gly340 to Thr343.

This sequence belongs to the phosphoglycerate kinase family. Monomer.

It is found in the cytoplasm. The enzyme catalyses (2R)-3-phosphoglycerate + ATP = (2R)-3-phospho-glyceroyl phosphate + ADP. It functions in the pathway carbohydrate degradation; glycolysis; pyruvate from D-glyceraldehyde 3-phosphate: step 2/5. The polypeptide is Phosphoglycerate kinase (Pseudomonas putida (strain GB-1)).